The primary structure comprises 111 residues: DNA-directed RNA polymerase subunit Rpo11 (111 aa).

This sequence belongs to the archaeal Rpo11/eukaryotic RPB11/RPC19 RNA polymerase subunit family. In terms of assembly, part of the RNA polymerase complex.

The protein localises to the cytoplasm. It catalyses the reaction RNA(n) + a ribonucleoside 5'-triphosphate = RNA(n+1) + diphosphate. In terms of biological role, DNA-dependent RNA polymerase (RNAP) catalyzes the transcription of DNA into RNA using the four ribonucleoside triphosphates as substrates. This is DNA-directed RNA polymerase subunit Rpo11 from Thermoplasma volcanium (strain ATCC 51530 / DSM 4299 / JCM 9571 / NBRC 15438 / GSS1).